The primary structure comprises 481 residues: Cobyric acid synthase (481 aa).

Residues 247–433 (AFNVVVPLLP…LHGLFDVPDS (187 aa)) enclose the GATase cobBQ-type domain. Cys-328 functions as the Nucleophile in the catalytic mechanism. His-425 is a catalytic residue.

The protein belongs to the CobB/CobQ family. CobQ subfamily.

The protein operates within cofactor biosynthesis; adenosylcobalamin biosynthesis. Functionally, catalyzes amidations at positions B, D, E, and G on adenosylcobyrinic A,C-diamide. NH(2) groups are provided by glutamine, and one molecule of ATP is hydrogenolyzed for each amidation. This is Cobyric acid synthase from Alcanivorax borkumensis (strain ATCC 700651 / DSM 11573 / NCIMB 13689 / SK2).